The chain runs to 215 residues: Large ribosomal subunit protein eL15 (215 aa).

Positions 179 to 215 are disordered; sequence GTVKHKWKKKEKEREQKKRHEATKYYRLQNYDKLPGK. Positions 188–202 are enriched in basic and acidic residues; the sequence is KEKEREQKKRHEATK.

It belongs to the eukaryotic ribosomal protein eL15 family.

This is Large ribosomal subunit protein eL15 from Sulfurisphaera tokodaii (strain DSM 16993 / JCM 10545 / NBRC 100140 / 7) (Sulfolobus tokodaii).